The following is a 264-amino-acid chain: Apolipoprotein A-I (264 aa).

The first 18 residues, 1–18 (MKAVVLAVAVLFLTGSQA), serve as a signal peptide directing secretion. Repeat copies occupy residues 67-88 (LNLLENWDTFGSTFGRLQEQLG) and 89-110 (PVTREFWDSLEKDTDWLRQEMN). Residues 67 to 264 (LNLLENWDTF…DEATQKLNTQ (198 aa)) are 10 X approximate tandem repeats. The residue at position 109 (M109) is a Methionine sulfoxide. A 3; half-length repeat occupies 111-121 (KDLEEVKQKVQ). Repeat copies occupy residues 122–143 (PYLDEFQKKWEEEVERYRPKVE), 144–165 (PLGAQLREGARQKLEELQKQLV), and 166–187 (PLGEDLRDRARLHVDALRTKLA). The stretch at 188-207 (PYSDQMRDRLAERLTALRDN) is one 7; truncated repeat. Position 193 is a methionine sulfoxide (M193). Repeat unit 8 spans residues 208-229 (PKLAEYHARATEHLKKLGEKTK). A 9; half-length repeat occupies 230-240 (PTLEDLRQGLM). Residue M240 is modified to Methionine sulfoxide. Copy 10 of the repeat occupies 241–264 (PWLESLKAKALSVLDEATQKLNTQ).

Belongs to the apolipoprotein A1/A4/E family. As to quaternary structure, homodimer. Interacts with APOA1BP and CLU. Component of a sperm activating protein complex (SPAP), consisting of APOA1, an immunoglobulin heavy chain, an immunoglobulin light chain and albumin. Interacts with NDRG1. Interacts with SCGB3A2. Interacts with NAXE and YJEFN3. Post-translationally, glycosylated. In terms of processing, palmitoylated. Phosphorylation sites are present in the extracellular medium.

The protein localises to the secreted. In terms of biological role, participates in the reverse transport of cholesterol from tissues to the liver for excretion by promoting cholesterol efflux from tissues and by acting as a cofactor for the lecithin cholesterol acyltransferase (LCAT). As part of the SPAP complex, activates spermatozoa motility. The polypeptide is Apolipoprotein A-I (Apoa1) (Nannospalax galili (Northern Israeli blind subterranean mole rat)).